Consider the following 723-residue polypeptide: Choline transporter-like protein 4 (723 aa).

Topologically, residues 1-36 (MGKKKQEEEQNSSEYGAPAQYDPTFNGPIHKRSCTD) are cytoplasmic. The chain crosses the membrane as a helical span at residues 37–57 (IICCVLFMLVITGYMVVGILA). Residues 58–245 (WLYGDPRHVL…RIFEDFAKTW (188 aa)) are Extracellular-facing. 4 N-linked (GlcNAc...) asparagine glycosylation sites follow: asparagine 71, asparagine 202, asparagine 211, and asparagine 219. Residues 246-266 (QWIVAGLVIAMVVSVLFLLLL) form a helical membrane-spanning segment. The Cytoplasmic segment spans residues 267-269 (RFT). A helical membrane pass occupies residues 270-290 (APVLIWILIFGVLAVGAFGIW). Residues 291–325 (YCYNDYMSLASSNLTFSNVGFTTNVQVYLQVRDTW) lie on the Extracellular side of the membrane. An N-linked (GlcNAc...) asparagine glycan is attached at asparagine 303. The chain crosses the membrane as a helical span at residues 326–346 (LAFLIILCIVEAVLILALIFL). Topologically, residues 347-374 (RTRILIAIALIQETSKALGHMMSTLLYP) are cytoplasmic. The helical transmembrane segment at 375 to 395 (VVTFVLLLVCVSYWGITALYL) threads the bilayer. The Extracellular portion of the chain corresponds to 396-464 (ATSGAPIYKV…RNLFNLQIYN (69 aa)). Residues asparagine 409, asparagine 421, and asparagine 430 are each glycosylated (N-linked (GlcNAc...) asparagine). Residues 465–485 (VVAFLWCVNFVIALGHCTLAG) traverse the membrane as a helical segment. At 486–516 (AFASYYWAFSKPADIPTFPLTQSFMRALRYH) the chain is on the cytoplasmic side. The chain crosses the membrane as a helical span at residues 517-537 (VGSLAFGALILTLVQIVRIIL). Over 538–578 (EYLDHKFKAAQNPCARFLMCCLKCCFWCLEKFIKFINRNAY) the chain is Extracellular. The chain crosses the membrane as a helical span at residues 579-599 (IMIAIYGKNFCVSAKNAFFLL). The Cytoplasmic portion of the chain corresponds to 600–615 (MRNIVRVVVLDKVTDL). Residues 616–636 (LLFFGKLLVVGGIGVLAFFFF) traverse the membrane as a helical segment. At 637 to 655 (SGRIQLPGNTFQTAALNYY) the chain is on the extracellular side. A helical transmembrane segment spans residues 656-676 (WMPIITVVFGAYLIAHGFFSV). Residues 677-723 (YNMGVDTLFLCFLEDLERNDGSAEKPYFMSKNLMKILNKKNKQPKTG) lie on the Cytoplasmic side of the membrane.

The protein belongs to the CTL (choline transporter-like) family.

The protein localises to the membrane. The protein resides in the apical cell membrane. It carries out the reaction choline(out) + n H(+)(in) = choline(in) + n H(+)(out). It catalyses the reaction thiamine diphosphate(out) = thiamine diphosphate(in). Its function is as follows. Choline transporter that seems to play a role in the choline-acetylcholine system and is required to the efferent innervation of hair cells in the olivocochlear bundle for the maintenance of physiological function of outer hair cells and the protection of hair cells from acoustic injury. Also described as a thiamine pyrophosphate transporter. In Danio rerio (Zebrafish), this protein is Choline transporter-like protein 4 (slc44a4).